The following is a 201-amino-acid chain: Holliday junction resolvase RecU (201 aa).

Residues T87, D89, D102, and Q121 each coordinate Mg(2+).

The protein belongs to the RecU family. Mg(2+) serves as cofactor.

Its subcellular location is the cytoplasm. The enzyme catalyses Endonucleolytic cleavage at a junction such as a reciprocal single-stranded crossover between two homologous DNA duplexes (Holliday junction).. Endonuclease that resolves Holliday junction intermediates in genetic recombination. Cleaves mobile four-strand junctions by introducing symmetrical nicks in paired strands. Promotes annealing of linear ssDNA with homologous dsDNA. Required for DNA repair, homologous recombination and chromosome segregation. The chain is Holliday junction resolvase RecU from Levilactobacillus brevis (strain ATCC 367 / BCRC 12310 / CIP 105137 / JCM 1170 / LMG 11437 / NCIMB 947 / NCTC 947) (Lactobacillus brevis).